We begin with the raw amino-acid sequence, 1070 residues long: DNA-directed RNA polymerase subunit beta (1070 aa).

This sequence belongs to the RNA polymerase beta chain family. In terms of assembly, in plastids the minimal PEP RNA polymerase catalytic core is composed of four subunits: alpha, beta, beta', and beta''. When a (nuclear-encoded) sigma factor is associated with the core the holoenzyme is formed, which can initiate transcription.

The protein resides in the plastid. Its subcellular location is the chloroplast. The catalysed reaction is RNA(n) + a ribonucleoside 5'-triphosphate = RNA(n+1) + diphosphate. Functionally, DNA-dependent RNA polymerase catalyzes the transcription of DNA into RNA using the four ribonucleoside triphosphates as substrates. This chain is DNA-directed RNA polymerase subunit beta, found in Chloranthus spicatus (Chulantree).